Reading from the N-terminus, the 374-residue chain is tRNA-specific 2-thiouridylase MnmA (374 aa).

ATP contacts are provided by residues 12 to 19 (GMSGGVDS) and M38. The interval 98 to 100 (NPD) is interaction with target base in tRNA. Catalysis depends on C103, which acts as the Nucleophile. C103 and C200 are oxidised to a cystine. Position 127 (G127) interacts with ATP. The interaction with tRNA stretch occupies residues 150-152 (KDQ). C200 serves as the catalytic Cysteine persulfide intermediate. Residues 311 to 312 (RY) form an interaction with tRNA region.

Belongs to the MnmA/TRMU family.

Its subcellular location is the cytoplasm. It carries out the reaction S-sulfanyl-L-cysteinyl-[protein] + uridine(34) in tRNA + AH2 + ATP = 2-thiouridine(34) in tRNA + L-cysteinyl-[protein] + A + AMP + diphosphate + H(+). In terms of biological role, catalyzes the 2-thiolation of uridine at the wobble position (U34) of tRNA, leading to the formation of s(2)U34. This Enterococcus faecalis (strain ATCC 700802 / V583) protein is tRNA-specific 2-thiouridylase MnmA.